Consider the following 169-residue polypeptide: MPLLDSFTVDHTRMNAPAVRVAKTMTTPKGDTITVFDLRFCVPNKEILSERGIHTLEHLFAGFMRDHLNSDRVEIIDISPMGCRTGFYMSLIGTPKEAEVAECWLAAMEDVLKVKQQSEIPELNEYQCGTYEMHSLEQAKEIAKNIIAAGVNVNRNDDLKLSDEILKGL.

The Fe cation site is built by His-54, His-58, and Cys-128.

It belongs to the LuxS family. As to quaternary structure, homodimer. Fe cation serves as cofactor.

It catalyses the reaction S-(5-deoxy-D-ribos-5-yl)-L-homocysteine = (S)-4,5-dihydroxypentane-2,3-dione + L-homocysteine. In terms of biological role, involved in the synthesis of autoinducer 2 (AI-2) which is secreted by bacteria and is used to communicate both the cell density and the metabolic potential of the environment. The regulation of gene expression in response to changes in cell density is called quorum sensing. Catalyzes the transformation of S-ribosylhomocysteine (RHC) to homocysteine (HC) and 4,5-dihydroxy-2,3-pentadione (DPD). The protein is S-ribosylhomocysteine lyase of Shewanella loihica (strain ATCC BAA-1088 / PV-4).